A 221-amino-acid chain; its full sequence is MARPSLPCAVVAVLLLALLPTPSTAGDPDLLQDICVADLTSAVKVNGFACKAAVTEDDFYFKGLAAAGNTNNTYGSVVTGANVEKLPGLNTLGVSMSRIDYAPGGLNPPHTHPRATEMVFVLQGTLDVGFITTANKLYTKTISAGDVFVFPRGLLHFQKNNGDTPAAVISAFNSQLPGTQSLAMTLFAASPEVPDGVLTKAFQVGTKEVEKIKSRLAPKKR.

Positions Met-1–Ala-25 are cleaved as a signal peptide. A disulfide bridge links Cys-35 with Cys-50. The region spanning Lys-62 to Glu-210 is the Cupin type-1 domain. An N-linked (GlcNAc...) asparagine glycan is attached at Asn-71. Residues His-110, His-112, Glu-117, and His-156 each contribute to the Mn(2+) site.

Belongs to the germin family. In terms of assembly, oligomer (believed to be a pentamer but probably hexamer).

It localises to the secreted. It is found in the extracellular space. Its subcellular location is the apoplast. May play a role in plant defense. Probably has no oxalate oxidase activity even if the active site is conserved. This is Germin-like protein 5-1 from Oryza sativa subsp. japonica (Rice).